The sequence spans 370 residues: Dual-specificity RNA methyltransferase RlmN (370 aa).

The active-site Proton acceptor is the Glu-93. One can recognise a Radical SAM core domain in the interval 99-331; the sequence is DRKRGTLCVS…TRVRRTRGDD (233 aa). Cys-106 and Cys-336 form a disulfide bridge. [4Fe-4S] cluster-binding residues include Cys-113, Cys-117, and Cys-120. S-adenosyl-L-methionine is bound by residues 162 to 163, Ser-194, 216 to 218, and Asn-293; these read GE and SLH. Residue Cys-336 is the S-methylcysteine intermediate of the active site.

It belongs to the radical SAM superfamily. RlmN family. It depends on [4Fe-4S] cluster as a cofactor.

Its subcellular location is the cytoplasm. It catalyses the reaction adenosine(2503) in 23S rRNA + 2 reduced [2Fe-2S]-[ferredoxin] + 2 S-adenosyl-L-methionine = 2-methyladenosine(2503) in 23S rRNA + 5'-deoxyadenosine + L-methionine + 2 oxidized [2Fe-2S]-[ferredoxin] + S-adenosyl-L-homocysteine. The catalysed reaction is adenosine(37) in tRNA + 2 reduced [2Fe-2S]-[ferredoxin] + 2 S-adenosyl-L-methionine = 2-methyladenosine(37) in tRNA + 5'-deoxyadenosine + L-methionine + 2 oxidized [2Fe-2S]-[ferredoxin] + S-adenosyl-L-homocysteine. Functionally, specifically methylates position 2 of adenine 2503 in 23S rRNA and position 2 of adenine 37 in tRNAs. m2A2503 modification seems to play a crucial role in the proofreading step occurring at the peptidyl transferase center and thus would serve to optimize ribosomal fidelity. This is Dual-specificity RNA methyltransferase RlmN from Coxiella burnetii (strain CbuK_Q154) (Coxiella burnetii (strain Q154)).